The following is a 757-amino-acid chain: MLSLLVWILTLSDTFSQGTQTRFSQEPADQTVVAGQRAVLPCVLLNYSGIVQWTKDGLALGMGQGLKAWPRYRVVGSADAGQYNLEITDAELSDDASYECQATEAALRSRRAKLTVLIPPEDTRIDGGPVILLQAGTPHNLTCRAFNAKPAATIIWFRDGTQQEGAVASTELLKDGKRETTVSQLLINPTDLDIGRVFTCRSMNEAIPSGKETSIELDVHHPPTVTLSIEPQTVQEGERVVFTCQATANPEILGYRWAKGGFLIEDAHESRYETNVDYSFFTEPVSCEVHNKVGSTNVSTLVNVHFAPRIVVDPKPTTTDIGSDVTLTCVWVGNPPLTLTWTKKDSNMVLSNSNQLLLKSVTQADAGTYTCRAIVPRIGVAEREVPLYVNGPPIISSEAVQYAVRGDGGKVECFIGSTPPPDRIAWAWKENFLEVGTLERYTVERTNSGSGVLSTLTINNVMEADFQTHYNCTAWNSFGPGTAIIQLEEREVLPVGIIAGATIGASILLIFFFIALVFFLYRRRKGSRKDVTLRKLDIKVETVNREPLTMHSDREDDTASVSTATRVMKAIYSSFKDDVDLKQDLRCDTIDTREEYEMKDPTNGYYNVRAHEDRPSSRAVLYADYRAPGPARFDGRPSSRLSHSSGYAQLNTYSRGPASDYGPEPTPPGPAAPAGTDTTSQLSYENYEKFNSHPFPGAAGYPTYRLGYPQAPPSGLERTPYEAYDPIGKYATATRFSYTSQHSDYGQRFQQRMQTHV.

The first 16 residues, 1 to 16 (MLSLLVWILTLSDTFS), serve as a signal peptide directing secretion. Over 17-499 (QGTQTRFSQE…REVLPVGIIA (483 aa)) the chain is Extracellular. Ig-like C2-type domains follow at residues 21 to 115 (TRFS…AKLT), 120 to 216 (PEDT…TSIE), 223 to 299 (PTVT…TNVS), 308 to 387 (PRIV…EVPL), and 392 to 488 (PPII…IQLE). Residues Cys-42 and Cys-100 are joined by a disulfide bond. N-linked (GlcNAc...) asparagine glycans are attached at residues Asn-46 and Asn-140. Cystine bridges form between Cys-143-Cys-200 and Cys-244-Cys-287. Asn-297 carries an N-linked (GlcNAc...) asparagine glycan. A disulfide bridge connects residues Cys-329 and Cys-371. The short motif at 405–407 (RGD) is the Cell attachment site element. An intrachain disulfide couples Cys-413 to Cys-472. N-linked (GlcNAc...) asparagine glycosylation occurs at Asn-471. Residues 500–520 (GATIGASILLIFFFIALVFFL) traverse the membrane as a helical segment. Over 521-757 (YRRRKGSRKD…RFQQRMQTHV (237 aa)) the chain is Cytoplasmic. At Ser-574 the chain carries Phosphoserine. Residues Tyr-605 and Tyr-606 each carry the phosphotyrosine; by FYN modification. A phosphotyrosine mark is found at Tyr-622 and Tyr-625. The interval 649-679 (QLNTYSRGPASDYGPEPTPPGPAAPAGTDTT) is disordered. Phosphotyrosine is present on Tyr-724.

Belongs to the immunoglobulin superfamily. Interacts with TJP1/ZO-1 and with NPHS2/podocin (via the C-terminus). Interacts with NPHS1/nephrin (via the Ig-like domains); this interaction is dependent on KIRREL1 glycosylation. Homodimer (via the Ig-like domains). Interacts when tyrosine-phosphorylated with GRB2. Phosphorylation probably regulates the interaction with NSH2. Phosphorylated at Tyr-605 and Tyr-606 by FYN, leading to GRB2 binding. In terms of processing, N-glycosylated. As to expression, abundantly expressed in kidney. Specifically expressed in podocytes of kidney glomeruli.

It is found in the cell membrane. Its function is as follows. Required for proper function of the glomerular filtration barrier. It is involved in the maintenance of a stable podocyte architecture with interdigitating foot processes connected by specialized cell-cell junctions, known as the slit diaphragm. It is a signaling protein that needs the presence of TEC kinases to fully trans-activate the transcription factor AP-1. This chain is Kin of IRRE-like protein 1, found in Homo sapiens (Human).